The sequence spans 159 residues: Photosystem II extrinsic protein U, chloroplastic (159 aa).

Belongs to the PsbU family. PSII is composed of 1 copy each of membrane proteins PsbA, PsbB, PsbC, PsbD, PsbE, PsbF, PsbH, PsbI, PsbJ, PsbK, PsbL, PsbM, PsbT, PsbX, PsbY, PsbZ, Psb30/Ycf12, at least 3 peripheral proteins of the oxygen-evolving complex and a large number of cofactors. It forms dimeric complexes. Part of the oxygen-evolving complex of photosystem II.

Its subcellular location is the plastid. The protein resides in the chloroplast thylakoid membrane. Functionally, one of the extrinsic, lumenal subunits of photosystem II (PSII). PSII is a light-driven water plastoquinone oxidoreductase, using light energy to abstract electrons from H(2)O, generating a proton gradient subsequently used for ATP formation. The extrinsic proteins stabilize the structure of photosystem II oxygen-evolving complex (OEC), the ion environment of oxygen evolution and protect the OEC against heat-induced inactivation. This Karenia brevis (Red tide dinoflagellate) protein is Photosystem II extrinsic protein U, chloroplastic.